The primary structure comprises 35 residues: Photosystem II reaction center protein T (35 aa).

A helical transmembrane segment spans residues 3–23; it reads ALVYTFLLVSTLGIIFFAIFF.

This sequence belongs to the PsbT family. In terms of assembly, PSII is composed of 1 copy each of membrane proteins PsbA, PsbB, PsbC, PsbD, PsbE, PsbF, PsbH, PsbI, PsbJ, PsbK, PsbL, PsbM, PsbT, PsbY, PsbZ, Psb30/Ycf12, at least 3 peripheral proteins of the oxygen-evolving complex and a large number of cofactors. It forms dimeric complexes.

The protein localises to the plastid. It localises to the chloroplast thylakoid membrane. Found at the monomer-monomer interface of the photosystem II (PS II) dimer, plays a role in assembly and dimerization of PSII. PSII is a light-driven water plastoquinone oxidoreductase, using light energy to abstract electrons from H(2)O, generating a proton gradient subsequently used for ATP formation. The chain is Photosystem II reaction center protein T from Stewartia pseudocamellia (Japanese stewartia).